A 420-amino-acid polypeptide reads, in one-letter code: UDP-N-acetylglucosamine 1-carboxyvinyltransferase (420 aa).

22–23 provides a ligand contact to phosphoenolpyruvate; sequence KN. Arg93 provides a ligand contact to UDP-N-acetyl-alpha-D-glucosamine. The active-site Proton donor is the Cys117. Cys117 carries the 2-(S-cysteinyl)pyruvic acid O-phosphothioketal modification. The UDP-N-acetyl-alpha-D-glucosamine site is built by Asp307 and Ile329.

Belongs to the EPSP synthase family. MurA subfamily.

Its subcellular location is the cytoplasm. It catalyses the reaction phosphoenolpyruvate + UDP-N-acetyl-alpha-D-glucosamine = UDP-N-acetyl-3-O-(1-carboxyvinyl)-alpha-D-glucosamine + phosphate. It functions in the pathway cell wall biogenesis; peptidoglycan biosynthesis. Functionally, cell wall formation. Adds enolpyruvyl to UDP-N-acetylglucosamine. This chain is UDP-N-acetylglucosamine 1-carboxyvinyltransferase, found in Alteromonas mediterranea (strain DSM 17117 / CIP 110805 / LMG 28347 / Deep ecotype).